Consider the following 492-residue polypeptide: MEPSSKKVTGRLMLAVGGAVLGSLQFGYNTGVINAPQKVIEEFYNQTWNHRYGESIPSTTLTTLWSLSVAIFSVGGMIGSFSVGLFVNRFGRRNSMLMMNLLAFVSAVLMGFSKLGKSFEMLILGRFIIGVYCGLTTGFVPMYVGEVSPTALRGALGTLHQLGIVVGILIAQVFGLDSIMGNADLWPLLLSVIFIPALLQCILLPFCPESPRFLLINRNEENRAKSVLKKLRGTADVTRDLQEMKEEGRQMMREKKVTILELFRSPAYRQPILIAVVLQLSQQLSGINAVFYYSTSIFEKAGVQQPVYATIGSGIVNTAFTVVSLFVVERAGRRTLHLIGLAGMAGCAVLMTIALALLEQLPWMSYLSIVAIFGFVAFFEVGPGPIPWFIVAELFSQGPRPAAVAVAGFSNWTSNFIVGMCFQYVEQLCGPYVFIIFTVLLVLFFIFTYFKVPETKGRTFDEIASGFRQGGASQSDKTPEELFHPLGADSQV.

Residue methionine 1 is modified to N-acetylmethionine. Residues 1–11 (MEPSSKKVTGR) lie on the Cytoplasmic side of the membrane. A helical transmembrane segment spans residues 12-33 (LMLAVGGAVLGSLQFGYNTGVI). At 34–66 (NAPQKVIEEFYNQTWNHRYGESIPSTTLTTLWS) the chain is on the extracellular side. A glycan (N-linked (GlcNAc...) asparagine) is linked at asparagine 45. The helical transmembrane segment at 67 to 87 (LSVAIFSVGGMIGSFSVGLFV) threads the bilayer. The Cytoplasmic portion of the chain corresponds to 88 to 90 (NRF). A helical transmembrane segment spans residues 91–112 (GRRNSMLMMNLLAFVSAVLMGF). The Extracellular segment spans residues 113 to 120 (SKLGKSFE). The helical transmembrane segment at 121–144 (MLILGRFIIGVYCGLTTGFVPMYV) threads the bilayer. Over 145–155 (GEVSPTALRGA) the chain is Cytoplasmic. A helical membrane pass occupies residues 156-176 (LGTLHQLGIVVGILIAQVFGL). Glutamine 161 contacts D-glucose. Residues 177 to 185 (DSIMGNADL) lie on the Extracellular side of the membrane. Residues 186-206 (WPLLLSVIFIPALLQCILLPF) traverse the membrane as a helical segment. The Cytoplasmic portion of the chain corresponds to 207–271 (CPESPRFLLI…LFRSPAYRQP (65 aa)). The residue at position 226 (serine 226) is a Phosphoserine. The chain crosses the membrane as a helical span at residues 272-293 (ILIAVVLQLSQQLSGINAVFYY). Residues 282–283 (QQ) and asparagine 288 contribute to the D-glucose site. Topologically, residues 294–306 (STSIFEKAGVQQP) are extracellular. A helical transmembrane segment spans residues 307–328 (VYATIGSGIVNTAFTVVSLFVV). Residue asparagine 317 participates in D-glucose binding. Over 329 to 334 (ERAGRR) the chain is Cytoplasmic. A helical membrane pass occupies residues 335–355 (TLHLIGLAGMAGCAVLMTIAL). Residues 356 to 365 (ALLEQLPWMS) are Extracellular-facing. A helical transmembrane segment spans residues 366-388 (YLSIVAIFGFVAFFEVGPGPIPW). Residues glutamate 380 and tryptophan 388 each contribute to the D-glucose site. Residues 389-401 (FIVAELFSQGPRP) lie on the Cytoplasmic side of the membrane. Residues 402–422 (AAVAVAGFSNWTSNFIVGMCF) traverse the membrane as a helical segment. The Extracellular segment spans residues 423-429 (QYVEQLC). The chain crosses the membrane as a helical span at residues 430–450 (GPYVFIIFTVLLVLFFIFTYF). The Cytoplasmic portion of the chain corresponds to 451–492 (KVPETKGRTFDEIASGFRQGGASQSDKTPEELFHPLGADSQV). Serine 465 bears the Phosphoserine mark. Residues 468 to 492 (RQGGASQSDKTPEELFHPLGADSQV) form a disordered region. A Phosphothreonine modification is found at threonine 478. Position 490 is a phosphoserine (serine 490).

Belongs to the major facilitator superfamily. Sugar transporter (TC 2.A.1.1) family. Glucose transporter subfamily. Found in a complex with ADD2, DMTN and SLC2A1. Interacts (via C-terminus cytoplasmic region) with DMTN. Interacts with SNX27; the interaction is required when endocytosed to prevent degradation in lysosomes and promote recycling to the plasma membrane. Interacts with STOM. Interacts with GIPC (via PDZ domain). Interacts with SGTA (via Gln-rich region). Interacts with isoform 1 of BSG. Interacts with SMIM43; the interaction may promote SLC2A1-mediated glucose transport to meet the energy needs of mesendoderm differentiation. Post-translationally, phosphorylation at Ser-226 by PKC promotes glucose uptake by increasing cell membrane localization. In terms of tissue distribution, detected in osteoblastic cells (at protein level). Detected in brain, and at lower levels in kidney, heart and lung.

It localises to the cell membrane. It is found in the photoreceptor inner segment. The catalysed reaction is D-glucose(out) = D-glucose(in). Its activity is regulated as follows. The uptake of glucose is inhibited by cytochalasin B. Glucose uptake is increased in response to phorbol ester 12-O-tetradecanoylphorbol-13-acetate (TPA) treatment: TPA-induced glucose uptake requires phosphorylation at Ser-226. Facilitative glucose transporter, which is responsible for constitutive or basal glucose uptake. Has a very broad substrate specificity; can transport a wide range of aldoses including both pentoses and hexoses. Most important energy carrier of the brain: present at the blood-brain barrier and assures the energy-independent, facilitative transport of glucose into the brain. In association with BSG and NXNL1, promotes retinal cone survival by increasing glucose uptake into photoreceptors. Required for mesendoderm differentiation. The protein is Solute carrier family 2, facilitated glucose transporter member 1 of Rattus norvegicus (Rat).